The sequence spans 71 residues: Sec-independent protein translocase protein TatA (71 aa).

The chain crosses the membrane as a helical span at residues 1–21 (MGSFSLLHWLVVLVIVLLVFG). Residues 43-71 (LREDDKPTDQLGSTSQSTASGPQQDHGKH) are disordered. Residues 52-65 (QLGSTSQSTASGPQ) are compositionally biased toward polar residues.

The protein belongs to the TatA/E family. In terms of assembly, the Tat system comprises two distinct complexes: a TatABC complex, containing multiple copies of TatA, TatB and TatC subunits, and a separate TatA complex, containing only TatA subunits. Substrates initially bind to the TatABC complex, which probably triggers association of the separate TatA complex to form the active translocon.

The protein resides in the cell inner membrane. Part of the twin-arginine translocation (Tat) system that transports large folded proteins containing a characteristic twin-arginine motif in their signal peptide across membranes. TatA could form the protein-conducting channel of the Tat system. This is Sec-independent protein translocase protein TatA from Xylella fastidiosa (strain 9a5c).